The primary structure comprises 255 residues: Triosephosphate isomerase (255 aa).

Substrate is bound at residue 10 to 12 (NWK). Residue His-96 is the Electrophile of the active site. Glu-169 serves as the catalytic Proton acceptor. Substrate contacts are provided by residues Gly-175, Ser-214, and 235-236 (GG).

It belongs to the triosephosphate isomerase family. As to quaternary structure, homodimer.

It is found in the cytoplasm. The catalysed reaction is D-glyceraldehyde 3-phosphate = dihydroxyacetone phosphate. It functions in the pathway carbohydrate biosynthesis; gluconeogenesis. The protein operates within carbohydrate degradation; glycolysis; D-glyceraldehyde 3-phosphate from glycerone phosphate: step 1/1. Involved in the gluconeogenesis. Catalyzes stereospecifically the conversion of dihydroxyacetone phosphate (DHAP) to D-glyceraldehyde-3-phosphate (G3P). This is Triosephosphate isomerase from Coxiella burnetii (strain Dugway 5J108-111).